The chain runs to 226 residues: uncharacterized protein (226 aa).

The region spanning 18 to 219 (LTIRNYTETD…YGVLMEWKNV (202 aa)) is the N-acetyltransferase domain.

Belongs to the acetyltransferase family.

This is an uncharacterized protein from Bacillus subtilis (strain 168).